The chain runs to 71 residues: MGAQLSGGRGAPEPAQTQPQPQPQPAAPEGPEQPRHPPQPQPQPQPQPQPEPSPWGPLDDVRFLIACTSWY.

Over residues 1–10 (MGAQLSGGRG) the composition is skewed to gly residues. Residues 1–61 (MGAQLSGGRG…PSPWGPLDDV (61 aa)) form a disordered region. Residues 36–55 (HPPQPQPQPQPQPQPEPSPW) are compositionally biased toward pro residues.

In Homo sapiens (Human), this protein is Protein MMP24OS.